We begin with the raw amino-acid sequence, 686 residues long: Amphiphysin (686 aa).

Coiled coils occupy residues 10 to 83 (AKNV…SLHE) and 144 to 191 (DYDS…QEEL). Residues 24-240 (VLQKLGKADE…MTKLGDQHAD (217 aa)) form the BAR domain. Disordered regions lie at residues 244–314 (SIQG…PTKE), 421–441 (AETEQALPTEPQAEEPPATAA), and 483–597 (VEEA…AGAV). Serine 252 carries the phosphoserine modification. A Phosphothreonine modification is found at threonine 260. Positions 261-274 (PSPPEEPSPLPSPT) are enriched in pro residues. Phosphoserine occurs at positions 262, 268, 272, and 276. At threonine 280 the chain carries Phosphothreonine. A compositionally biased stretch (low complexity) spans 424–441 (EQALPTEPQAEEPPATAA). Position 500 is a phosphoserine (serine 500). Residues 541–562 (SNHEGEGEHQETATGTEPREAA) are compositionally biased toward basic and acidic residues. In terms of domain architecture, SH3 spans 613 to 686 (GFLYKVETLH…FPENFTRRLE (74 aa)). Serine 629 carries the post-translational modification Phosphoserine.

Heterodimer with BIN1. Binds SH3GLB1. Interacts with REPS1 and SGIP1. Binds AP2A2. Interacts with AP2B1. Interacts with DNM1 and SYNJ1.

The protein localises to the cytoplasmic vesicle. The protein resides in the secretory vesicle. Its subcellular location is the synaptic vesicle membrane. It localises to the cytoplasm. It is found in the cytoskeleton. Functionally, may participate in mechanisms of regulated exocytosis in synapses and certain endocrine cell types. May control the properties of the membrane associated cytoskeleton. This chain is Amphiphysin (Amph), found in Mus musculus (Mouse).